A 242-amino-acid polypeptide reads, in one-letter code: Uridylate kinase (242 aa).

12–15 (KLSG) contacts ATP. Residues 20–25 (GNDGFG) form an involved in allosteric activation by GTP region. G54 contributes to the UMP binding site. 2 residues coordinate ATP: G55 and R59. UMP is bound by residues D74 and 135–142 (TGNPYFST). N163, Y169, and D172 together coordinate ATP.

The protein belongs to the UMP kinase family. Homohexamer.

Its subcellular location is the cytoplasm. The catalysed reaction is UMP + ATP = UDP + ADP. Its pathway is pyrimidine metabolism; CTP biosynthesis via de novo pathway; UDP from UMP (UMPK route): step 1/1. Its activity is regulated as follows. Allosterically activated by GTP. Inhibited by UTP. Catalyzes the reversible phosphorylation of UMP to UDP. The chain is Uridylate kinase from Listeria innocua serovar 6a (strain ATCC BAA-680 / CLIP 11262).